A 284-amino-acid chain; its full sequence is Bifunctional protein FolD (284 aa).

Residues 165–167 (GRG), Thr192, and Val233 contribute to the NADP(+) site.

The protein belongs to the tetrahydrofolate dehydrogenase/cyclohydrolase family. In terms of assembly, homodimer.

It carries out the reaction (6R)-5,10-methylene-5,6,7,8-tetrahydrofolate + NADP(+) = (6R)-5,10-methenyltetrahydrofolate + NADPH. It catalyses the reaction (6R)-5,10-methenyltetrahydrofolate + H2O = (6R)-10-formyltetrahydrofolate + H(+). Its pathway is one-carbon metabolism; tetrahydrofolate interconversion. In terms of biological role, catalyzes the oxidation of 5,10-methylenetetrahydrofolate to 5,10-methenyltetrahydrofolate and then the hydrolysis of 5,10-methenyltetrahydrofolate to 10-formyltetrahydrofolate. The polypeptide is Bifunctional protein FolD (Corynebacterium glutamicum (strain R)).